A 290-amino-acid polypeptide reads, in one-letter code: MRIADYSVTKAVLERHGFTFKKSFGQNFLTDTNILQKIVDTAEIDDQVNVIEIGPGIGALTEFLAERAAEVMAFEIDHRLVPILADTLRDFDNVTVVNEDILKVDLAQHIQNFKNPDLPIKVVANLPYYITTPILMHLIESGIPFSEFVVMMQKEVADRISAQPNTKAYGSLSIAVQYYMTAKVAFIVPRTVFVPAPNVDSAILKMVRRPVPAVAVEDENFFFKVSKASFTHRRKTLWNNLTGYFGKTEEVKDKLTKALDQAGLSPSVRGEALSLEEFASLADALKGQGL.

Asn27, Leu29, Gly54, Glu75, Asp100, and Asn125 together coordinate S-adenosyl-L-methionine.

The protein belongs to the class I-like SAM-binding methyltransferase superfamily. rRNA adenine N(6)-methyltransferase family. RsmA subfamily.

It localises to the cytoplasm. The catalysed reaction is adenosine(1518)/adenosine(1519) in 16S rRNA + 4 S-adenosyl-L-methionine = N(6)-dimethyladenosine(1518)/N(6)-dimethyladenosine(1519) in 16S rRNA + 4 S-adenosyl-L-homocysteine + 4 H(+). In terms of biological role, specifically dimethylates two adjacent adenosines (A1518 and A1519) in the loop of a conserved hairpin near the 3'-end of 16S rRNA in the 30S particle. May play a critical role in biogenesis of 30S subunits. The sequence is that of Ribosomal RNA small subunit methyltransferase A from Streptococcus pneumoniae (strain P1031).